An 881-amino-acid polypeptide reads, in one-letter code: Rho GTPase-activating protein 17 (881 aa).

The BAR domain maps to 14–246 (QTVGRAEKTE…MRAHQDKWAE (233 aa)). One can recognise a Rho-GAP domain in the interval 252–442 (TPLEEHLKRS…PIIQHADWFF (191 aa)). Residues 459–475 (TPSSNHSFHTGNDSDSG) are compositionally biased toward polar residues. A disordered region spans residues 459-482 (TPSSNHSFHTGNDSDSGTLERKRP). A phosphoserine mark is found at Ser484 and Ser575. Positions 511-881 (GGTLNRKHIS…IDNDTESTAL (371 aa)) are disordered. Residues 592–617 (RNNSQIASGQNQPQAAAGSHQLSMGQ) show a composition bias toward polar residues. Positions 637–650 (APAPPKPGNPPPGH) are enriched in pro residues. Residues 653–664 (GQSSSGTSQHPP) are compositionally biased toward low complexity. Positions 665–678 (SLSPKPPTRSPSPP) are enriched in pro residues. Phosphothreonine is present on residues Thr679 and Thr682. Low complexity predominate over residues 679 to 698 (TQHTGQPPGQPSAPSQLSAP). 2 positions are modified to phosphoserine: Ser702 and Ser704. Composition is skewed to pro residues over residues 712–721 (NHPPPQPPTQ), 752–764 (HTPPQTPTPPSTP), and 806–816 (RPSVPPPPQPP). Phosphothreonine occurs at positions 753, 757, and 759. Residues 753–766 (TPPQTPTPPSTPPL) carry the SH3-binding motif. Ser762 carries the phosphoserine modification. Thr763 is subject to Phosphothreonine. Residues 822-844 (GDSSLTNTAPTASKIVTDSNSRV) are compositionally biased toward polar residues. Positions 845–865 (SEPHRSIFPEMHSDSASKDVP) are enriched in basic and acidic residues. Positions 872-881 (IDNDTESTAL) are enriched in acidic residues.

Component of a complex whose core is composed of ARHGAP17, AMOT, PALS1, PATJ and PARD3/PAR3. Interacts with NHERF1, FNBP1, TRIP10, CAPZA (CAPZA1, CAPZA2 or CAPZA3), CAPZB, CD2AP and SH3KBP1/CIN85. In terms of tissue distribution, ubiquitously expressed. Expressed at higher level in heart and placenta.

The protein resides in the membrane. It localises to the cytoplasm. Its subcellular location is the cell junction. The protein localises to the tight junction. Rho GTPase-activating protein involved in the maintenance of tight junction by regulating the activity of CDC42, thereby playing a central role in apical polarity of epithelial cells. Specifically acts as a GTPase activator for the CDC42 GTPase by converting it to an inactive GDP-bound state. The complex formed with AMOT acts by regulating the uptake of polarity proteins at tight junctions, possibly by deciding whether tight junction transmembrane proteins are recycled back to the plasma membrane or sent elsewhere. Participates in the Ca(2+)-dependent regulation of exocytosis, possibly by catalyzing GTPase activity of Rho family proteins and by inducing the reorganization of the cortical actin filaments. Acts as a GTPase activator in vitro for RAC1. This is Rho GTPase-activating protein 17 (ARHGAP17) from Homo sapiens (Human).